The following is a 118-amino-acid chain: Probable mitochondrial pyruvate carrier 2 (118 aa).

3 helical membrane passes run 19–35 (VHFWAPAMKWTLVLSGI), 50–66 (YAALCATGAIWTRWSLI), and 72–94 (YFNATVNFFLAIVGAVQVSRILV).

The protein belongs to the mitochondrial pyruvate carrier (MPC) (TC 2.A.105) family. The functional 150 kDa pyruvate import complex is a heteromer of mpc1 and mpc2.

It is found in the mitochondrion inner membrane. In terms of biological role, mediates the uptake of pyruvate into mitochondria. This is Probable mitochondrial pyruvate carrier 2 from Schizosaccharomyces pombe (strain 972 / ATCC 24843) (Fission yeast).